A 192-amino-acid chain; its full sequence is Ras-like GTP-binding protein Rho1 (192 aa).

12–19 (GDGACGKT) serves as a coordination point for GTP. Positions 34–42 (YVPTVFENY) match the Effector region motif. GTP-binding positions include 59–63 (DTAGQ) and 117–120 (NKKD). Position 189 is a cysteine methyl ester (C189). C189 carries the S-geranylgeranyl cysteine lipid modification. Positions 190-192 (LLL) are cleaved as a propeptide — removed in mature form.

This sequence belongs to the small GTPase superfamily. Rho family. As to quaternary structure, interacts with capu. Interacts (via REM repeats) with Pkn (via N-terminus). Interacts (via N-terminus) with wash (via N-terminus). May interact with dia/diaphanous (via CBD/FH3 domain). In terms of tissue distribution, expressed in hemocytes (at protein level).

The protein resides in the cell membrane. It is found in the cytoplasm. Its subcellular location is the cytoskeleton. It localises to the apical cell membrane. The protein localises to the lateral cell membrane. Functionally, has a role in regulating actin cytoskeletal organization: required during early development for proper execution of morphogenetic movements of individual cells and groups of cells important for the formation of the embryonic body plan. Plays a role in regulating dorsal closure during embryogenesis. During axis elongation, required for Rho-kinase Rok planar polarity and adherens junction localization as well as for generating a planar polarized distribution of the actin-binding protein Shrm. During embryogenesis, acts upstream of wash to regulate the developmental migration of tail hemocytes anteriorly along the ventral midline. May have a role in eye development. Involved in targeted recruitment of dia/diaphanous to apical membranes of polarized epithelial cells. In Drosophila melanogaster (Fruit fly), this protein is Ras-like GTP-binding protein Rho1.